A 241-amino-acid polypeptide reads, in one-letter code: Homeobox protein TGIF2LX (241 aa).

Disordered regions lie at residues 1-58 and 127-207; these read MEAA…GNLP and GKGA…ELVS. Polar residues predominate over residues 10–39; that stretch reads ETQSPVQKDSPAKTQSPAQDTSIMSRNNAD. The segment at residues 48 to 111 is a DNA-binding region (homeobox; TALE-type); it reads EHKKKRKGNL…INARRRILPD (64 aa).

This sequence belongs to the TALE/TGIF homeobox family.

The protein localises to the nucleus. May have a transcription role in testis. The sequence is that of Homeobox protein TGIF2LX (TGIF2LX) from Pan paniscus (Pygmy chimpanzee).